We begin with the raw amino-acid sequence, 130 residues long: Small ribosomal subunit protein uS9 (130 aa).

Belongs to the universal ribosomal protein uS9 family.

The sequence is that of Small ribosomal subunit protein uS9 from Caldicellulosiruptor saccharolyticus (strain ATCC 43494 / DSM 8903 / Tp8T 6331).